An 89-amino-acid chain; its full sequence is Putative regulatory protein CYB_0055 (89 aa).

It belongs to the RemA family.

The protein is Putative regulatory protein CYB_0055 of Synechococcus sp. (strain JA-2-3B'a(2-13)) (Cyanobacteria bacterium Yellowstone B-Prime).